Reading from the N-terminus, the 467-residue chain is Fumarate hydratase class II (467 aa).

Substrate-binding positions include 98-100 (SGT), Arg-126, 129-132 (HPND), 139-141 (SSN), and Thr-187. The Proton donor/acceptor role is filled by His-188. The active site involves Ser-318. Substrate contacts are provided by residues Ser-319 and 324 to 326 (KVN).

This sequence belongs to the class-II fumarase/aspartase family. Fumarase subfamily. In terms of assembly, homotetramer.

The protein resides in the cytoplasm. The catalysed reaction is (S)-malate = fumarate + H2O. It functions in the pathway carbohydrate metabolism; tricarboxylic acid cycle; (S)-malate from fumarate: step 1/1. Involved in the TCA cycle. Catalyzes the stereospecific interconversion of fumarate to L-malate. The chain is Fumarate hydratase class II from Escherichia coli O6:H1 (strain CFT073 / ATCC 700928 / UPEC).